The sequence spans 815 residues: Phenylalanine--tRNA ligase beta subunit (815 aa).

Positions 40 to 155 constitute a tRNA-binding domain; the sequence is APPFDKIVVA…EDAPVGQNIR (116 aa). The B5 domain occupies 406 to 485; sequence PQRRPVSLRL…RIYGFERIAA (80 aa). 4 residues coordinate Mg(2+): D463, D469, E472, and E473. In terms of domain architecture, FDX-ACB spans 712 to 814; the sequence is SKFPAAVRDL…LGEAFQARLR (103 aa).

Belongs to the phenylalanyl-tRNA synthetase beta subunit family. Type 1 subfamily. As to quaternary structure, tetramer of two alpha and two beta subunits. Mg(2+) is required as a cofactor.

Its subcellular location is the cytoplasm. It catalyses the reaction tRNA(Phe) + L-phenylalanine + ATP = L-phenylalanyl-tRNA(Phe) + AMP + diphosphate + H(+). This is Phenylalanine--tRNA ligase beta subunit from Cupriavidus pinatubonensis (strain JMP 134 / LMG 1197) (Cupriavidus necator (strain JMP 134)).